The sequence spans 218 residues: Eukaryotic translation initiation factor 3 subunit K (218 aa).

A2 is modified (N-acetylalanine). Phosphothreonine is present on T28. Residues Y42–K204 form the PCI domain. Phosphoserine is present on S217.

In terms of assembly, component of the eukaryotic translation initiation factor 3 (eIF-3) complex, which is composed of 13 subunits: EIF3A, EIF3B, EIF3C, EIF3D, EIF3E, EIF3F, EIF3G, EIF3H, EIF3I, EIF3J, EIF3K, EIF3L and EIF3M. The eIF-3 complex appears to include 3 stable modules: module A is composed of EIF3A, EIF3B, EIF3G and EIF3I; module B is composed of EIF3F, EIF3H, and EIF3M; and module C is composed of EIF3C, EIF3D, EIF3E, EIF3K and EIF3L. EIF3C of module C binds EIF3B of module A and EIF3H of module B, thereby linking the three modules. EIF3J is a labile subunit that binds to the eIF-3 complex via EIF3B. The eIF-3 complex interacts with RPS6KB1 under conditions of nutrient depletion. Mitogenic stimulation leads to binding and activation of a complex composed of MTOR and RPTOR, leading to phosphorylation and release of RPS6KB1 and binding of EIF4B to eIF-3. Interacts with CCND3, but not with CCND1 and CCND2. Ubiquitous, with the highest levels of expression in brain, testis and kidney.

The protein localises to the nucleus. Its subcellular location is the cytoplasm. In terms of biological role, component of the eukaryotic translation initiation factor 3 (eIF-3) complex, which is required for several steps in the initiation of protein synthesis. The eIF-3 complex associates with the 40S ribosome and facilitates the recruitment of eIF-1, eIF-1A, eIF-2:GTP:methionyl-tRNAi and eIF-5 to form the 43S pre-initiation complex (43S PIC). The eIF-3 complex stimulates mRNA recruitment to the 43S PIC and scanning of the mRNA for AUG recognition. The eIF-3 complex is also required for disassembly and recycling of post-termination ribosomal complexes and subsequently prevents premature joining of the 40S and 60S ribosomal subunits prior to initiation. The eIF-3 complex specifically targets and initiates translation of a subset of mRNAs involved in cell proliferation, including cell cycling, differentiation and apoptosis, and uses different modes of RNA stem-loop binding to exert either translational activation or repression. This is Eukaryotic translation initiation factor 3 subunit K from Homo sapiens (Human).